The primary structure comprises 218 residues: Imidazole glycerol phosphate synthase subunit HisH (218 aa).

Residues 5–213 (RLAVIDYEAG…VEFVARCSPL (209 aa)) enclose the Glutamine amidotransferase type-1 domain. Residue cysteine 83 is the Nucleophile of the active site. Residues histidine 188 and glutamate 190 contribute to the active site.

As to quaternary structure, heterodimer of HisH and HisF.

The protein resides in the cytoplasm. It catalyses the reaction 5-[(5-phospho-1-deoxy-D-ribulos-1-ylimino)methylamino]-1-(5-phospho-beta-D-ribosyl)imidazole-4-carboxamide + L-glutamine = D-erythro-1-(imidazol-4-yl)glycerol 3-phosphate + 5-amino-1-(5-phospho-beta-D-ribosyl)imidazole-4-carboxamide + L-glutamate + H(+). The enzyme catalyses L-glutamine + H2O = L-glutamate + NH4(+). Its pathway is amino-acid biosynthesis; L-histidine biosynthesis; L-histidine from 5-phospho-alpha-D-ribose 1-diphosphate: step 5/9. In terms of biological role, IGPS catalyzes the conversion of PRFAR and glutamine to IGP, AICAR and glutamate. The HisH subunit catalyzes the hydrolysis of glutamine to glutamate and ammonia as part of the synthesis of IGP and AICAR. The resulting ammonia molecule is channeled to the active site of HisF. The protein is Imidazole glycerol phosphate synthase subunit HisH of Synechococcus sp. (strain JA-2-3B'a(2-13)) (Cyanobacteria bacterium Yellowstone B-Prime).